Here is a 212-residue protein sequence, read N- to C-terminus: Ribosomal RNA small subunit methyltransferase G (212 aa).

S-adenosyl-L-methionine-binding positions include glycine 80, leucine 85, 131–132 (AE), and arginine 146.

It belongs to the methyltransferase superfamily. RNA methyltransferase RsmG family.

The protein localises to the cytoplasm. The enzyme catalyses guanosine(527) in 16S rRNA + S-adenosyl-L-methionine = N(7)-methylguanosine(527) in 16S rRNA + S-adenosyl-L-homocysteine. In terms of biological role, specifically methylates the N7 position of guanine in position 527 of 16S rRNA. This Xylella fastidiosa (strain 9a5c) protein is Ribosomal RNA small subunit methyltransferase G.